A 131-amino-acid chain; its full sequence is MSKDFSRTQRVSQQLQKELAMILQREVRDSRLGMVTISDVEVSRDLAYAKVFVTFLCVGEQTPESCLAALREHEVHIRMMLGKRIRLRLTPEVRFYYDNTLVEGMRMSNLVTEVVNKDKIKQKDAGREDEE.

Belongs to the RbfA family. In terms of assembly, monomer. Binds 30S ribosomal subunits, but not 50S ribosomal subunits or 70S ribosomes.

Its subcellular location is the cytoplasm. In terms of biological role, one of several proteins that assist in the late maturation steps of the functional core of the 30S ribosomal subunit. Associates with free 30S ribosomal subunits (but not with 30S subunits that are part of 70S ribosomes or polysomes). Required for efficient processing of 16S rRNA. May interact with the 5'-terminal helix region of 16S rRNA. The sequence is that of Ribosome-binding factor A from Vibrio vulnificus (strain CMCP6).